Reading from the N-terminus, the 107-residue chain is 4-carboxymethyl-4-methylbutenolide mutase (107 aa).

Catalysis depends on histidine 26, which acts as the Proton donor/acceptor. Positions 26 and 39 each coordinate 3-methylmuconolactone. Positions 26 and 39 each coordinate 4-methylmuconolactone.

Belongs to the MmlI family. Homodimer.

The catalysed reaction is 4-methylmuconolactone = 3-methylmuconolactone. Its activity is regulated as follows. Inhibited by p-chloromercuribenzoate. Its function is as follows. Isomerase involved in the degradation of 4-methylsalicylate and 5-methylsalicylate. Catalyzes the isomerization of the dead-end metabolite 4-methylmuconolactone (4-ML) to 3-methylmuconolactone (3-ML), which can then be further degraded through a modified 3-oxoadipate pathway. Can also use 1-methylbislactone but not 3-methyl-cis,cis-muconate. This Pseudomonas reinekei protein is 4-carboxymethyl-4-methylbutenolide mutase.